The following is a 330-amino-acid chain: Geranylgeranyl diphosphate synthase (330 aa).

3 residues coordinate isopentenyl diphosphate: lysine 43, arginine 46, and histidine 75. Positions 82 and 86 each coordinate Mg(2+). Arginine 91 is an an all-trans-polyprenyl diphosphate binding site. Arginine 92 is an isopentenyl diphosphate binding site. An all-trans-polyprenyl diphosphate contacts are provided by lysine 175, threonine 176, glutamine 213, lysine 230, and lysine 240.

This sequence belongs to the FPP/GGPP synthase family. Requires Mg(2+) as cofactor.

The catalysed reaction is isopentenyl diphosphate + (2E,6E)-farnesyl diphosphate = (2E,6E,10E)-geranylgeranyl diphosphate + diphosphate. It functions in the pathway isoprenoid biosynthesis; geranylgeranyl diphosphate biosynthesis; geranylgeranyl diphosphate from farnesyl diphosphate and isopentenyl diphosphate: step 1/1. In terms of biological role, catalyzes the condensation of isopentenyl pyrophosphate with the allylic pyrophosphates to yield geranylgeranyl diphosphate (GGPP) which is a precursor of the ether-linked lipids. It is able to use dimethylallyl diphosphate (DMAPP), geranyl diphosphate (GPP), and (all-E)-geranyl diphosphate (E-FPP) as an allylic substrate. In Sulfolobus acidocaldarius (strain ATCC 33909 / DSM 639 / JCM 8929 / NBRC 15157 / NCIMB 11770), this protein is Geranylgeranyl diphosphate synthase (gds).